The sequence spans 258 residues: Sugar fermentation stimulation protein homolog (258 aa).

It belongs to the SfsA family.

The sequence is that of Sugar fermentation stimulation protein homolog from Marinomonas sp. (strain MWYL1).